The sequence spans 180 residues: Chromosome-anchoring protein RacA (180 aa).

A DNA-binding region (H-T-H motif) is located at residues 5–25; it reads TPFIAKKLGVSPKAVVRIAQQ. Positions 89–151 form a coiled coil; sequence SHDFEQLTAQ…LEATLKKEEP (63 aa).

Belongs to the RacA family.

It localises to the cytoplasm. In terms of biological role, required for the formation of axial filaments and for anchoring the origin regions at the cell poles in sporulating cells, thus ensuring proper chromosome segregation in the prespore. Binds in a dispersed manner throughout the chromosome but preferentially to sites clustered in the origin portion of the chromosome, causing condensation of the chromosome and its remodeling into an elongated, anchored structure. The chain is Chromosome-anchoring protein RacA from Bacillus cereus (strain ATCC 10987 / NRS 248).